Reading from the N-terminus, the 61-residue chain is Temporin-1Tb (61 aa).

Residues 1 to 22 (MFTLKKSLLLLFFLGTINLSLC) form the signal peptide. Positions 23–44 (EEERNAEEERRDEPDERDVQVE) are excised as a propeptide. Position 59 is a leucine amide (leucine 59).

It belongs to the frog skin active peptide (FSAP) family. Temporin subfamily. As to quaternary structure, homo-oligomerizes in membranes as homodimers, homotrimers, or even homotetramers. Oligomerizes in presence of LPS. In Gram-positive bacterial mimetic membranes, the aggregation is weakly pronounced, and penetration proceeds more rapidly and is deeper than in Gram-negative bacterial mimetic membranes where aggregation is high. Homo-oligomerization is prevented by temporin-L. As to expression, expressed by the skin glands.

The protein resides in the secreted. It localises to the target cell membrane. The protein localises to the target cell. Its subcellular location is the target cell cytoplasm. Amphipathic alpha-helical antimicrobial peptide with potent activity against Gram-positive bacteria, weak activity against Gram-negative bacteria, and moderate activity against fungi. Mainly acts by causing membrane permeabilization, but is unable to forme pore-like openings. Is also able to penetrate eukaryotic cells (keratinocytes), and kill intracellular S.aureus (both wild-type and MRSA) without injuring host cells. Shows inhibitory effect on biofilm formation of Gram-positive bacteria, but not of Gram-negative bacteria. Shows antiviral activity against herpes simplex virus 1 (HSV-1) by disrupting the viral envelope. Also displays anti-leishmania activity by damaging parasite membrane. Does not show hemolytic activity. Acts synergistically with temporin-L that improves temporin-1Tb activity by preventing its self-association in lipopolysaccharides (LPS). In vitro, promotes cell migration and wound healing. This chain is Temporin-1Tb, found in Rana temporaria (European common frog).